Consider the following 289-residue polypeptide: Lipoyl synthase 1 (289 aa).

[4Fe-4S] cluster is bound by residues Cys33, Cys38, Cys44, Cys59, Cys63, Cys66, and Ser274. One can recognise a Radical SAM core domain in the interval 45–263 (FAGGTATFLI…RIGEEELGFL (219 aa)).

It belongs to the radical SAM superfamily. Lipoyl synthase family. [4Fe-4S] cluster serves as cofactor.

The protein resides in the cytoplasm. It catalyses the reaction [[Fe-S] cluster scaffold protein carrying a second [4Fe-4S](2+) cluster] + N(6)-octanoyl-L-lysyl-[protein] + 2 oxidized [2Fe-2S]-[ferredoxin] + 2 S-adenosyl-L-methionine + 4 H(+) = [[Fe-S] cluster scaffold protein] + N(6)-[(R)-dihydrolipoyl]-L-lysyl-[protein] + 4 Fe(3+) + 2 hydrogen sulfide + 2 5'-deoxyadenosine + 2 L-methionine + 2 reduced [2Fe-2S]-[ferredoxin]. The protein operates within protein modification; protein lipoylation via endogenous pathway; protein N(6)-(lipoyl)lysine from octanoyl-[acyl-carrier-protein]: step 2/2. Its function is as follows. Catalyzes the radical-mediated insertion of two sulfur atoms into the C-6 and C-8 positions of the octanoyl moiety bound to the lipoyl domains of lipoate-dependent enzymes, thereby converting the octanoylated domains into lipoylated derivatives. The sequence is that of Lipoyl synthase 1 from Parasynechococcus marenigrum (strain WH8102).